The following is a 119-amino-acid chain: Non-structural protein 3b (119 aa).

The DRBM domain occupies 3–79; that stretch reads YVSLLNQVWQ…AARKVCLRLQ (77 aa).

As to quaternary structure, interacts with host RUNX1 isoform b.

It localises to the host nucleus. It is found in the host nucleolus. The protein localises to the host mitochondrion. Functionally, induces host cell G0/G1 arrest and apoptosis. The chain is Non-structural protein 3b from Pipistrellus abramus (Japanese pipistrelle).